Reading from the N-terminus, the 422-residue chain is Gamma-glutamyl phosphate reductase (422 aa).

Belongs to the gamma-glutamyl phosphate reductase family.

The protein resides in the cytoplasm. The catalysed reaction is L-glutamate 5-semialdehyde + phosphate + NADP(+) = L-glutamyl 5-phosphate + NADPH + H(+). It participates in amino-acid biosynthesis; L-proline biosynthesis; L-glutamate 5-semialdehyde from L-glutamate: step 2/2. Its function is as follows. Catalyzes the NADPH-dependent reduction of L-glutamate 5-phosphate into L-glutamate 5-semialdehyde and phosphate. The product spontaneously undergoes cyclization to form 1-pyrroline-5-carboxylate. In Chloroflexus aurantiacus (strain ATCC 29366 / DSM 635 / J-10-fl), this protein is Gamma-glutamyl phosphate reductase.